The chain runs to 131 residues: Lysozyme C (131 aa).

Residues 2 to 131 enclose the C-type lysozyme domain; it reads KIYEQCELAR…VSQWIKGCKL (130 aa). Cystine bridges form between cysteine 7/cysteine 129, cysteine 31/cysteine 117, cysteine 66/cysteine 82, and cysteine 78/cysteine 96. Active-site residues include glutamate 36 and aspartate 54.

It belongs to the glycosyl hydrolase 22 family. In terms of assembly, monomer.

Its subcellular location is the secreted. It carries out the reaction Hydrolysis of (1-&gt;4)-beta-linkages between N-acetylmuramic acid and N-acetyl-D-glucosamine residues in a peptidoglycan and between N-acetyl-D-glucosamine residues in chitodextrins.. Its function is as follows. Lysozymes have primarily a bacteriolytic function; those in tissues and body fluids are associated with the monocyte-macrophage system and enhance the activity of immunoagents. Has strong bacteriolytic activity against M.luteus and V.cholerae, weak bacteriolytic activity against P.aeruginosa and no activity against A.hydrophila. The chain is Lysozyme C (LYZ) from Pelodiscus sinensis (Chinese softshell turtle).